Consider the following 315-residue polypeptide: 4-hydroxy-3-methylbut-2-enyl diphosphate reductase (315 aa).

C12 lines the [4Fe-4S] cluster pocket. Residues H40 and H74 each coordinate (2E)-4-hydroxy-3-methylbut-2-enyl diphosphate. Residues H40 and H74 each coordinate dimethylallyl diphosphate. Residues H40 and H74 each coordinate isopentenyl diphosphate. [4Fe-4S] cluster is bound at residue C96. A (2E)-4-hydroxy-3-methylbut-2-enyl diphosphate-binding site is contributed by H124. H124 provides a ligand contact to dimethylallyl diphosphate. Position 124 (H124) interacts with isopentenyl diphosphate. E126 functions as the Proton donor in the catalytic mechanism. Residue T167 coordinates (2E)-4-hydroxy-3-methylbut-2-enyl diphosphate. [4Fe-4S] cluster is bound at residue C213. S241, S242, N243, and S290 together coordinate (2E)-4-hydroxy-3-methylbut-2-enyl diphosphate. Dimethylallyl diphosphate is bound by residues S241, S242, N243, and S290. Isopentenyl diphosphate contacts are provided by S241, S242, N243, and S290.

The protein belongs to the IspH family. The cofactor is [4Fe-4S] cluster.

The catalysed reaction is isopentenyl diphosphate + 2 oxidized [2Fe-2S]-[ferredoxin] + H2O = (2E)-4-hydroxy-3-methylbut-2-enyl diphosphate + 2 reduced [2Fe-2S]-[ferredoxin] + 2 H(+). It carries out the reaction dimethylallyl diphosphate + 2 oxidized [2Fe-2S]-[ferredoxin] + H2O = (2E)-4-hydroxy-3-methylbut-2-enyl diphosphate + 2 reduced [2Fe-2S]-[ferredoxin] + 2 H(+). The protein operates within isoprenoid biosynthesis; dimethylallyl diphosphate biosynthesis; dimethylallyl diphosphate from (2E)-4-hydroxy-3-methylbutenyl diphosphate: step 1/1. Its pathway is isoprenoid biosynthesis; isopentenyl diphosphate biosynthesis via DXP pathway; isopentenyl diphosphate from 1-deoxy-D-xylulose 5-phosphate: step 6/6. In terms of biological role, catalyzes the conversion of 1-hydroxy-2-methyl-2-(E)-butenyl 4-diphosphate (HMBPP) into a mixture of isopentenyl diphosphate (IPP) and dimethylallyl diphosphate (DMAPP). Acts in the terminal step of the DOXP/MEP pathway for isoprenoid precursor biosynthesis. The chain is 4-hydroxy-3-methylbut-2-enyl diphosphate reductase from Chloroherpeton thalassium (strain ATCC 35110 / GB-78).